Reading from the N-terminus, the 314-residue chain is Acetaldehyde dehydrogenase 3 (314 aa).

Residue Cys-132 is the Acyl-thioester intermediate of the active site. NAD(+)-binding positions include 163–171 (SAGPGTRAN) and Asn-291.

It belongs to the acetaldehyde dehydrogenase family.

The enzyme catalyses acetaldehyde + NAD(+) + CoA = acetyl-CoA + NADH + H(+). The protein is Acetaldehyde dehydrogenase 3 of Dechloromonas aromatica (strain RCB).